We begin with the raw amino-acid sequence, 132 residues long: Glycine cleavage system H protein (132 aa).

One can recognise a Lipoyl-binding domain in the interval 24-106; sequence IATIGLSAFA…YGDGWLIKVR (83 aa). At lysine 65 the chain carries N6-lipoyllysine.

This sequence belongs to the GcvH family. The glycine cleavage system is composed of four proteins: P, T, L and H. It depends on (R)-lipoate as a cofactor.

Functionally, the glycine cleavage system catalyzes the degradation of glycine. The H protein shuttles the methylamine group of glycine from the P protein to the T protein. In Rippkaea orientalis (strain PCC 8801 / RF-1) (Cyanothece sp. (strain PCC 8801)), this protein is Glycine cleavage system H protein.